We begin with the raw amino-acid sequence, 433 residues long: Glutamate-1-semialdehyde 2,1-aminomutase (433 aa).

K271 bears the N6-(pyridoxal phosphate)lysine mark.

Belongs to the class-III pyridoxal-phosphate-dependent aminotransferase family. HemL subfamily. As to quaternary structure, homodimer. Pyridoxal 5'-phosphate is required as a cofactor.

Its subcellular location is the cytoplasm. The enzyme catalyses (S)-4-amino-5-oxopentanoate = 5-aminolevulinate. It participates in porphyrin-containing compound metabolism; protoporphyrin-IX biosynthesis; 5-aminolevulinate from L-glutamyl-tRNA(Glu): step 2/2. Its pathway is porphyrin-containing compound metabolism; chlorophyll biosynthesis. The sequence is that of Glutamate-1-semialdehyde 2,1-aminomutase from Prochlorococcus marinus (strain MIT 9301).